Here is a 76-residue protein sequence, read N- to C-terminus: RNA-binding protein KhpA (76 aa).

In terms of domain architecture, KH spans 29–76 (SLHIELSVHPDDMGKVIGKQGRTAKALRSVVYAAATKQKRRVRLDIID).

The protein belongs to the KhpA RNA-binding protein family. In terms of assembly, forms a complex with KhpB.

Its subcellular location is the cytoplasm. In terms of biological role, a probable RNA chaperone. Forms a complex with KhpB which binds to cellular RNA and controls its expression. Plays a role in peptidoglycan (PG) homeostasis and cell length regulation. The protein is RNA-binding protein KhpA of Halalkalibacterium halodurans (strain ATCC BAA-125 / DSM 18197 / FERM 7344 / JCM 9153 / C-125) (Bacillus halodurans).